Consider the following 342-residue polypeptide: Ubiquitin fusion degradation protein 1 homolog (342 aa).

Disordered stretches follow at residues 245–276 (FGGAGRRLDGKKKPSSSVSLSDGTGVSTSNAA) and 318–342 (EKEASKAGQPSNVFRGGNRTLRGAR). Positions 259-275 (SSSVSLSDGTGVSTSNA) are enriched in polar residues.

This sequence belongs to the UFD1 family. In terms of assembly, forms a complex composed of ubxn-3, ufd-1, npl-4.1 and cdc-48.1; within the complex interacts with cdc-48.1. Interacts with cdc-48.2. Interacts with npl-4.1 and/or npl-4.2.

It is found in the cytoplasm. The protein resides in the nucleus. Functions at a post-ubiquitination step in the ubiquitin fusion degradation (UFD) pathway. In association with npl-4.1 and/or npl-4.2 and ATPase cdc-48.1 and/or cdc-48.2, involved in the cytoplasmic elimination of misfolded proteins exported from the ER. This pathway, known as ERAD, prevents the activation of the unfolded protein response (UPR) caused by the accumulation of misfolded proteins in the ER. During S phase and in association with npl-4.1 and/or npl-4.2, cdc-48.1 and/or cdc-48.2 and ubxn-3, ensures the degradation of DNA licensing factor cdt-1 after the initiation of DNA replication and thus the disassembly of the DNA replication CMG helicase complex by promoting the dissociation from chromatin of several of its components including cdc-45 and sld-5. Regulates ubxn-3 nuclear localization during S phase. This chain is Ubiquitin fusion degradation protein 1 homolog (ufd-1), found in Caenorhabditis elegans.